Reading from the N-terminus, the 214-residue chain is Outer-membrane lipoprotein LolB (214 aa).

The signal sequence occupies residues 1-25 (MNNLKRFTESIFSCIALSTLLFLGG). Residue C26 is the site of N-palmitoyl cysteine attachment. C26 is lipidated: S-diacylglycerol cysteine.

It belongs to the LolB family. In terms of assembly, monomer.

It localises to the cell outer membrane. In terms of biological role, plays a critical role in the incorporation of lipoproteins in the outer membrane after they are released by the LolA protein. In Shewanella putrefaciens (strain CN-32 / ATCC BAA-453), this protein is Outer-membrane lipoprotein LolB.